The chain runs to 311 residues: Heme A synthase (311 aa).

Over 1-6 (MQRFIK) the chain is Cytoplasmic. The helical transmembrane segment at 7 to 27 (WLAVITSLDLLVVLLGGALVT) threads the bilayer. The Extracellular portion of the chain corresponds to 28 to 62 (KTGSGQGCGKSWPLCNGEFVPSNLSMETIIELSHR). Cys-35 and Cys-42 form a disulfide bridge. Residue Glu-58 is part of the active site. Residue His-61 participates in heme o binding. A helical membrane pass occupies residues 63-83 (LTSGSAGILVTLLCILSWKYY). Residues 84 to 91 (KHVRETKT) lie on the Cytoplasmic side of the membrane. A helical transmembrane segment spans residues 92 to 112 (LAILSFVFLVAQALMGAAAVV). Topologically, residues 113–121 (WGQMPAVLA) are extracellular. The helical transmembrane segment at 122–142 (IHFGISLISFASVILLTCLIF) threads the bilayer. Heme o is bound at residue His-123. The Cytoplasmic segment spans residues 143–159 (EIDQKFDARSLIMDKKM). A helical transmembrane segment spans residues 160–180 (KFHIYGVTIYSYIVVYTGALV). Residues 181–211 (RHERATLACPDFPLCSKSRPMPTQLHEWVQM) lie on the Extracellular side of the membrane. The cysteines at positions 189 and 195 are disulfide-linked. Residues 212-232 (GHRVAAMLIFAWILYAMIIAI) traverse the membrane as a helical segment. His-213 lines the heme b pocket. The Cytoplasmic segment spans residues 233–243 (RHYKQQRVVYW). The chain crosses the membrane as a helical span at residues 244 to 264 (GWIISFILVTLQAIVGILVVF). Residues 265–271 (TNASLAM) lie on the Extracellular side of the membrane. A helical transmembrane segment spans residues 272–292 (ALLHSLFISCLFAVLCYLVMI). Residue His-275 participates in heme b binding. The Cytoplasmic portion of the chain corresponds to 293 to 311 (GTRSTVNAKETESTSKQTK).

The protein belongs to the COX15/CtaA family. Type 1 subfamily. Interacts with CtaB. Heme b is required as a cofactor.

Its subcellular location is the cell membrane. It carries out the reaction Fe(II)-heme o + 2 A + H2O = Fe(II)-heme a + 2 AH2. The protein operates within porphyrin-containing compound metabolism; heme A biosynthesis; heme A from heme O: step 1/1. In terms of biological role, catalyzes the conversion of heme O to heme A by two successive hydroxylations of the methyl group at C8. The first hydroxylation forms heme I, the second hydroxylation results in an unstable dihydroxymethyl group, which spontaneously dehydrates, resulting in the formyl group of heme A. The sequence is that of Heme A synthase from Bacillus mycoides (strain KBAB4) (Bacillus weihenstephanensis).